Consider the following 105-residue polypeptide: Urease subunit beta (105 aa).

This sequence belongs to the urease beta subunit family. As to quaternary structure, heterotrimer of UreA (gamma), UreB (beta) and UreC (alpha) subunits. Three heterotrimers associate to form the active enzyme.

The protein resides in the cytoplasm. It catalyses the reaction urea + 2 H2O + H(+) = hydrogencarbonate + 2 NH4(+). It participates in nitrogen metabolism; urea degradation; CO(2) and NH(3) from urea (urease route): step 1/1. This chain is Urease subunit beta, found in Marinobacter nauticus (strain ATCC 700491 / DSM 11845 / VT8) (Marinobacter aquaeolei).